The chain runs to 333 residues: Taste receptor type 2 member 38 (333 aa).

Residues 1–17 lie on the Extracellular side of the membrane; the sequence is MLTLTHICTVSYEVRST. Residues 18–38 traverse the membrane as a helical segment; the sequence is FLFISVLEFAVGFLTNAFISL. Topologically, residues 39–55 are cytoplasmic; sequence VNFWDVVKRQPLSNSDC. A helical transmembrane segment spans residues 56–76; that stretch reads VLLCLSISRLFLHGLLFLSAI. Residues 77–94 are Extracellular-facing; the sequence is QLTHFQKLSEPLNHSYQV. A helical membrane pass occupies residues 95 to 115; the sequence is ILMLWMIANQANLWLAACLSL. Residues 116–142 are Cytoplasmic-facing; sequence LYCSKLIRFSHTFLICLASWVSRKISQ. A helical transmembrane segment spans residues 143-163; it reads MLLGIILCSCICTVLCVWCFF. Topologically, residues 164–190 are extracellular; it reads GRLHFTVTTVLFMNNNTRLNWQIKDLN. N-linked (GlcNAc...) asparagine glycosylation occurs at asparagine 178. A helical membrane pass occupies residues 191–211; the sequence is LFYSFLFCYLWSVPPFLLFLV. The Cytoplasmic segment spans residues 212–251; sequence SSGMLTVSLGRHMRTMKVYTRDSRDPSLEAHIKALKSLVS. The helical transmembrane segment at 252 to 272 threads the bilayer; sequence FFCFFVISSCAAFISVPLLIL. Topologically, residues 273–276 are extracellular; the sequence is WHDK. The helical transmembrane segment at 277-297 threads the bilayer; that stretch reads IGVMVCVGIMAACPSGHAAVL. The Cytoplasmic portion of the chain corresponds to 298–333; sequence ISGNAKLRRAVTTILLWAQSSLKVRADHMADSRTLC.

The protein belongs to the G-protein coupled receptor T2R family.

It localises to the membrane. In terms of biological role, receptor that may play a role in the perception of bitterness and is gustducin-linked. May play a role in sensing the chemical composition of the gastrointestinal content. The activity of this receptor may stimulate alpha gustducin, mediate PLC-beta-2 activation and lead to the gating of TRPM5. This Papio hamadryas (Hamadryas baboon) protein is Taste receptor type 2 member 38 (TAS2R38).